The primary structure comprises 395 residues: Acetyl-CoA acetyltransferase (395 aa).

The active-site Acyl-thioester intermediate is Cys90. 2 residues coordinate CoA: Tyr185 and Lys230. Tyr185 serves as a coordination point for K(+). Residues Ala246, Ala247, and Ala249 each contribute to the K(+) site. A CoA-binding site is contributed by Ser250. Val347 provides a ligand contact to K(+). Residues His351 and Cys381 each act as proton acceptor in the active site.

This sequence belongs to the thiolase-like superfamily. Thiolase family. In terms of assembly, homotetramer.

It is found in the cytoplasm. It carries out the reaction 2 acetyl-CoA = acetoacetyl-CoA + CoA. It functions in the pathway metabolic intermediate biosynthesis; (R)-mevalonate biosynthesis; (R)-mevalonate from acetyl-CoA: step 1/3. In terms of biological role, acetyl-CoA acetyltransferase; part of the first module of ergosterol biosynthesis pathway that includes the early steps of the pathway, conserved across all eukaryotes, and which results in the formation of mevalonate from acetyl-coenzyme A (acetyl-CoA). Erg10 catalyzes the formation of acetoacetyl-CoA from acetyl-CoA. The first module starts with the action of the cytosolic acetyl-CoA acetyltransferase eg10 that catalyzes the formation of acetoacetyl-CoA. The hydroxymethylglutaryl-CoA synthases erg13 then condenses acetyl-CoA with acetoacetyl-CoA to form HMG-CoA. The rate-limiting step of the early module is the reduction to mevalonate by the 3-hydroxy-3-methylglutaryl-coenzyme A (HMG-CoA) reductases hcs1. In Schizosaccharomyces pombe (strain 972 / ATCC 24843) (Fission yeast), this protein is Acetyl-CoA acetyltransferase (erg10).